Reading from the N-terminus, the 101-residue chain is Phosphoribosyl-AMP cyclohydrolase (101 aa).

Mg(2+) is bound at residue Asp71. A Zn(2+)-binding site is contributed by Cys72. Residues Asp73 and Asp75 each contribute to the Mg(2+) site. Zn(2+) contacts are provided by Cys88 and Cys95.

This sequence belongs to the PRA-CH family. Homodimer. Requires Mg(2+) as cofactor. The cofactor is Zn(2+).

Its subcellular location is the cytoplasm. It catalyses the reaction 1-(5-phospho-beta-D-ribosyl)-5'-AMP + H2O = 1-(5-phospho-beta-D-ribosyl)-5-[(5-phospho-beta-D-ribosylamino)methylideneamino]imidazole-4-carboxamide. Its pathway is amino-acid biosynthesis; L-histidine biosynthesis; L-histidine from 5-phospho-alpha-D-ribose 1-diphosphate: step 3/9. Functionally, catalyzes the hydrolysis of the adenine ring of phosphoribosyl-AMP. In Bacillus cereus (strain 03BB102), this protein is Phosphoribosyl-AMP cyclohydrolase.